The following is a 254-amino-acid chain: 3-deoxy-manno-octulosonate cytidylyltransferase (254 aa).

This sequence belongs to the KdsB family.

It is found in the cytoplasm. It carries out the reaction 3-deoxy-alpha-D-manno-oct-2-ulosonate + CTP = CMP-3-deoxy-beta-D-manno-octulosonate + diphosphate. It participates in nucleotide-sugar biosynthesis; CMP-3-deoxy-D-manno-octulosonate biosynthesis; CMP-3-deoxy-D-manno-octulosonate from 3-deoxy-D-manno-octulosonate and CTP: step 1/1. The protein operates within bacterial outer membrane biogenesis; lipopolysaccharide biosynthesis. Its function is as follows. Activates KDO (a required 8-carbon sugar) for incorporation into bacterial lipopolysaccharide in Gram-negative bacteria. The sequence is that of 3-deoxy-manno-octulosonate cytidylyltransferase from Haemophilus influenzae (strain 86-028NP).